We begin with the raw amino-acid sequence, 438 residues long: GDP-mannose 6-dehydrogenase (438 aa).

Tyrosine 10, valine 11, aspartate 30, lysine 35, threonine 86, and threonine 124 together coordinate NAD(+). The GDP-alpha-D-mannuronate site is built by glutamate 161, lysine 210, asparagine 214, histidine 217, asparagine 225, tyrosine 256, tyrosine 257, arginine 259, phenylalanine 262, and glycine 265. Residue cysteine 268 is part of the active site. Lysine 271 contributes to the NAD(+) binding site. Lysine 324 is a GDP-alpha-D-mannuronate binding site. Arginine 331 is a binding site for NAD(+).

It belongs to the UDP-glucose/GDP-mannose dehydrogenase family.

It carries out the reaction GDP-alpha-D-mannose + 2 NAD(+) + H2O = GDP-alpha-D-mannuronate + 2 NADH + 3 H(+). The protein operates within glycan biosynthesis; alginate biosynthesis. In terms of biological role, catalyzes the oxidation of guanosine diphospho-D-mannose (GDP-D-mannose) to GDP-D-mannuronic acid, a precursor for alginate polymerization. The alginate layer causes a mucoid phenotype and provides a protective barrier against host immune defenses and antibiotics. This Pseudomonas syringae pv. tomato (strain ATCC BAA-871 / DC3000) protein is GDP-mannose 6-dehydrogenase (algD).